A 369-amino-acid chain; its full sequence is 4beta-methylsterol monooxygenase (369 aa).

Positions 29 to 135 (WYVVEIDGRL…VKAQWGLIWL (107 aa)) constitute a Rieske domain. [2Fe-2S] cluster contacts are provided by Cys70, His72, Cys89, and His92.

Requires [2Fe-2S] cluster as cofactor.

The catalysed reaction is a 3beta-hydroxy-4,4-dimethylsteroid + 3 NADH + 3 O2 + 2 H(+) = a 3beta-hydroxy-4alpha-methylsteroid-4beta-carboxylate + 3 NAD(+) + 4 H2O. It catalyses the reaction 4,4-dimethyl-5alpha-cholesta-8,24-dien-3beta-ol + 3 NADH + 3 O2 + 2 H(+) = 4beta-carboxy-4alpha-methyl-5alpha-cholesta-8,24-dien-3beta-ol + 3 NAD(+) + 4 H2O. The enzyme catalyses a 3beta-hydroxy-4,4-dimethylsteroid + NADH + O2 + H(+) = a 3beta-hydroxy-4beta-hydroxymethyl-4alpha-methylsteroid + NAD(+) + H2O. It carries out the reaction a 3beta-hydroxy-4beta-hydroxymethyl-4alpha-methylsteroid + NADH + O2 + H(+) = a 3beta-hydroxy-4beta-formyl-4alpha-methylsteroid + NAD(+) + 2 H2O. The catalysed reaction is a 3beta-hydroxy-4beta-formyl-4alpha-methylsteroid + NADH + O2 = a 3beta-hydroxy-4alpha-methylsteroid-4beta-carboxylate + NAD(+) + H2O. It catalyses the reaction 4,4-dimethyl-5alpha-cholesta-8,24-dien-3beta-ol + NADH + O2 + H(+) = 4beta-hydroxymethyl-4alpha-methylzymosterol + NAD(+) + H2O. The enzyme catalyses 4beta-hydroxymethyl-4alpha-methylzymosterol + NADH + O2 + H(+) = 4beta-formylmethyl-4alpha-methyl-5alpha-cholesta-8,24-dien-3beta-ol + NAD(+) + 2 H2O. It carries out the reaction 4beta-formylmethyl-4alpha-methyl-5alpha-cholesta-8,24-dien-3beta-ol + NADH + O2 = 4beta-carboxy-4alpha-methyl-5alpha-cholesta-8,24-dien-3beta-ol + NAD(+) + H2O. The protein operates within steroid biosynthesis; sterol biosynthesis. In terms of biological role, participates in the biosynthesis of bacterial sterols. Together with SdmB, removes one methyl group from the C-4 position of 4,4-dimethylated steroid molecules. SdmA oxidizes the sterol 4beta-methyl group into first a hydroxyl, then an aldehyde and finally a carboxylic acid group. This Methylococcus capsulatus (strain ATCC 33009 / NCIMB 11132 / Bath) protein is 4beta-methylsterol monooxygenase.